The sequence spans 1023 residues: RTX-I toxin determinant A from serotypes 5/10 (1023 aa).

A run of 3 helical transmembrane segments spans residues 226–256 (NNLP…ILSN), 297–326 (STTA…ADKF), and 367–406 (INSV…SGIL). Hemolysin-type calcium-binding repeat units lie at residues 730–747 (FGSR…DDEI), 748–765 (YGND…NDVI), 766–783 (HGGD…NDRL), 784–801 (IGGK…DDEL), 812–829 (LGGA…TNLF), and 830–847 (DGGV…KDIY).

The protein belongs to the RTX prokaryotic toxin (TC 1.C.11) family. In terms of processing, palmitoylated by ApxIC. The toxin only becomes active when modified.

The protein localises to the secreted. It localises to the host cell membrane. Its function is as follows. One of the virulence factors of A.pleuropneumoniae, which has a strong hemolytic activity and is cytotoxic for alveolar macrophages and neutrophils. This is RTX-I toxin determinant A from serotypes 5/10 (apxIA) from Actinobacillus pleuropneumoniae (Haemophilus pleuropneumoniae).